A 183-amino-acid chain; its full sequence is Ribulose bisphosphate carboxylase small subunit, chloroplastic (183 aa).

A chloroplast-targeting transit peptide spans 1–58; the sequence is MASSMLSTAAVACINRASPAQASMVAPFTGLKSTSAFPTTRKTTTDITSIASNGGRVQ.

It belongs to the RuBisCO small chain family. In terms of assembly, heterohexadecamer of 8 large and 8 small subunits.

The protein localises to the plastid. It localises to the chloroplast. In terms of biological role, ruBisCO catalyzes two reactions: the carboxylation of D-ribulose 1,5-bisphosphate, the primary event in carbon dioxide fixation, as well as the oxidative fragmentation of the pentose substrate. Both reactions occur simultaneously and in competition at the same active site. Although the small subunit is not catalytic it is essential for maximal activity. This is Ribulose bisphosphate carboxylase small subunit, chloroplastic from Hevea brasiliensis (Para rubber tree).